Consider the following 137-residue polypeptide: Sec-independent protein translocase protein TatB (137 aa).

Residues 2-22 form a helical membrane-spanning segment; it reads FANIGWGEMLILVIAGLVILG. The disordered stretch occupies residues 92 to 137; the sequence is FFTGKFDQQNGKPAAGQEKPVTPVNPPVTATPPSESTATPFDSDAT. The segment covering 122-131 has biased composition (low complexity); it reads TPPSESTATP.

The protein belongs to the TatB family. As to quaternary structure, the Tat system comprises two distinct complexes: a TatABC complex, containing multiple copies of TatA, TatB and TatC subunits, and a separate TatA complex, containing only TatA subunits. Substrates initially bind to the TatABC complex, which probably triggers association of the separate TatA complex to form the active translocon.

It is found in the cell membrane. Functionally, part of the twin-arginine translocation (Tat) system that transports large folded proteins containing a characteristic twin-arginine motif in their signal peptide across membranes. Together with TatC, TatB is part of a receptor directly interacting with Tat signal peptides. TatB may form an oligomeric binding site that transiently accommodates folded Tat precursor proteins before their translocation. In Mycobacterium sp. (strain JLS), this protein is Sec-independent protein translocase protein TatB.